Here is an 853-residue protein sequence, read N- to C-terminus: Vacuolar protein sorting-associated protein 41 homolog (853 aa).

Over residues 1 to 25 (MAEAEEQETESLEESTDESEEESEE) the composition is skewed to acidic residues. The tract at residues 1 to 32 (MAEAEEQETESLEESTDESEEESEEEPKLKYE) is disordered. The interaction with ARL8B stretch occupies residues 1-539 (MAEAEEQETE…YLTLRHKDVF (539 aa)). The stretch at 567-711 (VDMLLDNEDK…SIDKPPFITG (145 aa)) is one CHCR repeat. The segment at 790-838 (CESCLSPILPTDAAKPFSVVVFHCRHMFHKECLPMPSMNAPAQYCNICS) adopts an RING-type; atypical zinc-finger fold.

The protein belongs to the VPS41 family. In terms of assembly, component of the putative homotypic fusion and vacuole protein sorting (HOPS) complex; the core of which composed of the class C Vps proteins VPS11, VPS16, VPS18 and VPS33A, is associated with VPS39 and VPS41. Interacts with RILP, MON1B. Interacts with ARL8B (GTP-bound form); involved in recruitment to lysosomes and probably hierarchial assembly of the HOPS complex at lysosomal membranes. In vitro can self-assemble into a lattice. Associates with adapter protein complex 3 (AP-3) and clathrin:AP-3 complexes. Interacts with STX17; this interaction is increased in the absence of TMEM39A. Interacts with ARL8B and PLEKHM1; the interaction mediates the recruitment of the HOPS complex to lysosomes. Interacts with RAB7, RAB2A and RAB2B. Interacts with RAB39A (GTP-bound) and RAB39B (GTP-bound); interaction with RAB39A leads to a functional HOPS complex that mediates autophagosome-lysosome membrane tethering.

Its subcellular location is the endosome membrane. It localises to the late endosome membrane. The protein resides in the early endosome membrane. The protein localises to the lysosome membrane. It is found in the golgi apparatus. Its subcellular location is the trans-Golgi network. It localises to the cytoplasmic vesicle. The protein resides in the clathrin-coated vesicle. The protein localises to the cytoplasm. It is found in the cytosol. In terms of biological role, plays a role in vesicle-mediated protein trafficking to lysosomal compartments including the endocytic membrane transport and autophagic pathways. Believed to act in part as a core component of the putative HOPS endosomal tethering complex is proposed to be involved in the Rab5-to-Rab7 endosome conversion probably implicating MON1A/B, and via binding SNAREs and SNARE complexes to mediate tethering and docking events during SNARE-mediated membrane fusion. The HOPS complex is proposed to be recruited to Rab7 on the late endosomal membrane and to regulate late endocytic, phagocytic and autophagic traffic towards lysosomes. Involved in homotypic vesicle fusions between late endosomes and in heterotypic fusions between late endosomes and lysosomes implicated in degradation of endocytosed cargo. Required for fusion of autophagosomes with lysosomes. Links the HOPS complex to endosomal via its association with RILP and to lysosomal membranes via its association with ARL8B, suggesting that these interactions may bring the compartments to close proximity for fusion. Involved in the direct trans-Golgi network to late endosomes transport of lysosomal membrane proteins independently of HOPS. Involved in sorting to the regulated secretory pathway presumably implicating the AP-3 adapter complex. May play a role in HOPS-independent function in the regulated secretory pathway. This is Vacuolar protein sorting-associated protein 41 homolog (Vps41) from Mus musculus (Mouse).